The primary structure comprises 1966 residues: Dedicator of cytokinesis protein 4 (1966 aa).

One can recognise an SH3 domain in the interval 6–67 (EHEKYGVVIA…PSSYVHLKNA (62 aa)). Position 167 is a phosphotyrosine (tyrosine 167). Residue threonine 193 is modified to Phosphothreonine. The 174-residue stretch at 401–574 (RNDLYITIER…ESFCITSFLC (174 aa)) folds into the C2 DOCK-type domain. One can recognise a DOCKER domain in the interval 1190 to 1596 (KTELNKEEMY…LGIQEFSACM (407 aa)). Serine 1599, serine 1607, serine 1614, serine 1618, serine 1620, and serine 1631 each carry phosphoserine. 2 disordered regions span residues 1648–1729 (SQAS…IYPT) and 1742–1966 (IGDG…VSQL). Over residues 1672–1703 (PSPSTSSLSSTHSASPNVTSSAPSSARASPLL) the composition is skewed to low complexity. Serine 1769 bears the Phosphoserine mark. Residues 1788 to 1794 (PPVPPRP) carry the SH3-binding motif. Residues 1795 to 1809 (TQTASPARHTTSVSP) show a composition bias toward polar residues. Over residues 1838 to 1863 (SNSPVLSGSYSSGISSLSRCSTSETS) the composition is skewed to low complexity. The span at 1864–1873 (GFENQVNEQS) shows a compositional bias: polar residues. Positions 1941–1954 (SHLENGARRTDPGP) are enriched in basic and acidic residues.

It belongs to the DOCK family. As to quaternary structure, interacts with nucleotide-free Rap1; functions as a guanine nucleotide exchange factor (GEF) for Rap1. Interacts (via DOCKER domain) with RAC1; functions as a guanine nucleotide exchange factor (GEF) for RAC1. Interacts with the SH3 domain of CRK. Interacts with FASLG. Interacts with ELMO2 and EPHA2; mediates activation of RAC1 by EPHA2. Interacts with USH1C (via PDZ 1 domain). In terms of tissue distribution, widely expressed at low level. Highly expressed in skeletal muscle, prostate and ovary. May be specifically expressed in the brain and eye.

It is found in the cell membrane. The protein localises to the cell projection. The protein resides in the cytoplasm. It localises to the cytosol. Its function is as follows. Functions as a guanine nucleotide exchange factor (GEF) that promotes the exchange of GDP to GTP, converting inactive GDP-bound small GTPases into their active GTP-bound form. Involved in regulation of adherens junction between cells. Plays a role in cell migration. Functionally, has a higher guanine nucleotide exchange factor activity compared to other isoforms. The sequence is that of Dedicator of cytokinesis protein 4 (DOCK4) from Homo sapiens (Human).